The sequence spans 62 residues: Photosystem II reaction center protein Z (62 aa).

Helical transmembrane passes span 8–28 (AVFALIAISFLLVIGVPVALA) and 41–61 (FSGVSLWIGSVLFVGILNSFI).

Belongs to the PsbZ family. As to quaternary structure, PSII is composed of 1 copy each of membrane proteins PsbA, PsbB, PsbC, PsbD, PsbE, PsbF, PsbH, PsbI, PsbJ, PsbK, PsbL, PsbM, PsbT, PsbY, PsbZ, Psb30/Ycf12, at least 3 peripheral proteins of the oxygen-evolving complex and a large number of cofactors. It forms dimeric complexes.

Its subcellular location is the plastid. The protein localises to the chloroplast thylakoid membrane. Functionally, may control the interaction of photosystem II (PSII) cores with the light-harvesting antenna, regulates electron flow through the 2 photosystem reaction centers. PSII is a light-driven water plastoquinone oxidoreductase, using light energy to abstract electrons from H(2)O, generating a proton gradient subsequently used for ATP formation. The chain is Photosystem II reaction center protein Z from Pinus thunbergii (Japanese black pine).